We begin with the raw amino-acid sequence, 381 residues long: 1-deoxy-D-xylulose 5-phosphate reductoisomerase (381 aa).

Positions 10, 11, 12, 13, and 120 each coordinate NADPH. Lys-121 is a binding site for 1-deoxy-D-xylulose 5-phosphate. Residue Glu-122 participates in NADPH binding. Residue Asp-146 participates in Mn(2+) binding. The 1-deoxy-D-xylulose 5-phosphate site is built by Ser-147, Glu-148, Ser-172, and His-195. A Mn(2+)-binding site is contributed by Glu-148. Gly-201 is an NADPH binding site. 1-deoxy-D-xylulose 5-phosphate contacts are provided by Ser-208, Asn-213, Lys-214, and Glu-217. Residue Glu-217 participates in Mn(2+) binding.

Belongs to the DXR family. Mg(2+) serves as cofactor. The cofactor is Mn(2+).

It carries out the reaction 2-C-methyl-D-erythritol 4-phosphate + NADP(+) = 1-deoxy-D-xylulose 5-phosphate + NADPH + H(+). It participates in isoprenoid biosynthesis; isopentenyl diphosphate biosynthesis via DXP pathway; isopentenyl diphosphate from 1-deoxy-D-xylulose 5-phosphate: step 1/6. Catalyzes the NADPH-dependent rearrangement and reduction of 1-deoxy-D-xylulose-5-phosphate (DXP) to 2-C-methyl-D-erythritol 4-phosphate (MEP). The chain is 1-deoxy-D-xylulose 5-phosphate reductoisomerase from Thermodesulfovibrio yellowstonii (strain ATCC 51303 / DSM 11347 / YP87).